A 436-amino-acid chain; its full sequence is Ribulose bisphosphate carboxylase large chain (436 aa).

Residues N104 and T154 each coordinate substrate. K156 acts as the Proton acceptor in catalysis. K158 lines the substrate pocket. Mg(2+) contacts are provided by K182, D184, and E185. K182 carries the post-translational modification N6-carboxylysine. Catalysis depends on H275, which acts as the Proton acceptor. Substrate contacts are provided by R276, H308, and S360.

Belongs to the RuBisCO large chain family. Type I subfamily. As to quaternary structure, heterohexadecamer of 8 large chains and 8 small chains. The cofactor is Mg(2+).

The protein localises to the plastid. The protein resides in the chloroplast. It catalyses the reaction 2 (2R)-3-phosphoglycerate + 2 H(+) = D-ribulose 1,5-bisphosphate + CO2 + H2O. The catalysed reaction is D-ribulose 1,5-bisphosphate + O2 = 2-phosphoglycolate + (2R)-3-phosphoglycerate + 2 H(+). In terms of biological role, ruBisCO catalyzes two reactions: the carboxylation of D-ribulose 1,5-bisphosphate, the primary event in carbon dioxide fixation, as well as the oxidative fragmentation of the pentose substrate in the photorespiration process. Both reactions occur simultaneously and in competition at the same active site. This chain is Ribulose bisphosphate carboxylase large chain, found in Euglena viridis (Cercaria viridis).